We begin with the raw amino-acid sequence, 290 residues long: UPF0507 protein YML003W (290 aa).

The protein belongs to the UPF0507 family.

This is UPF0507 protein YML003W from Saccharomyces cerevisiae (strain ATCC 204508 / S288c) (Baker's yeast).